Consider the following 101-residue polypeptide: Small ribosomal subunit protein uS14 (101 aa).

It belongs to the universal ribosomal protein uS14 family. As to quaternary structure, part of the 30S ribosomal subunit. Contacts proteins S3 and S10.

Functionally, binds 16S rRNA, required for the assembly of 30S particles and may also be responsible for determining the conformation of the 16S rRNA at the A site. The chain is Small ribosomal subunit protein uS14 from Pasteurella multocida (strain Pm70).